The following is a 143-amino-acid chain: Large ribosomal subunit protein uL11 (143 aa).

This sequence belongs to the universal ribosomal protein uL11 family. In terms of assembly, part of the ribosomal stalk of the 50S ribosomal subunit. Interacts with L10 and the large rRNA to form the base of the stalk. L10 forms an elongated spine to which L12 dimers bind in a sequential fashion forming a multimeric L10(L12)X complex. One or more lysine residues are methylated.

Forms part of the ribosomal stalk which helps the ribosome interact with GTP-bound translation factors. This Verminephrobacter eiseniae (strain EF01-2) protein is Large ribosomal subunit protein uL11.